The sequence spans 65 residues: Beta-mammal toxin Tpa2 (65 aa).

The LCN-type CS-alpha/beta domain occupies 2-64 (KEGYLVGNDG…TWSRATNRCG (63 aa)). 4 disulfide bridges follow: C12-C63, C16-C38, C24-C44, and C28-C46.

As to expression, expressed by the venom gland.

The protein localises to the secreted. Functionally, beta toxins bind voltage-independently at site-4 of sodium channels (Nav) and shift the voltage of activation toward more negative potentials thereby affecting sodium channel activation and promoting spontaneous and repetitive firing. This toxin is lethal to mice. This Tityus pachyurus (Colombian scorpion) protein is Beta-mammal toxin Tpa2.